The sequence spans 50 residues: Photosystem II reaction center protein M (50 aa).

The chain crosses the membrane as a helical span at residues Gly7 to Ile27. The tract at residues Asp31–Ser50 is disordered.

Belongs to the PsbM family. As to quaternary structure, PSII is composed of 1 copy each of membrane proteins PsbA, PsbB, PsbC, PsbD, PsbE, PsbF, PsbH, PsbI, PsbJ, PsbK, PsbL, PsbM, PsbT, PsbX, PsbY, Psb30/Ycf12, peripheral proteins PsbO, CyanoQ (PsbQ), PsbU, PsbV and a large number of cofactors. It forms dimeric complexes.

The protein localises to the cellular thylakoid membrane. In terms of biological role, one of the components of the core complex of photosystem II (PSII). PSII is a light-driven water:plastoquinone oxidoreductase that uses light energy to abstract electrons from H(2)O, generating O(2) and a proton gradient subsequently used for ATP formation. It consists of a core antenna complex that captures photons, and an electron transfer chain that converts photonic excitation into a charge separation. This subunit is found at the monomer-monomer interface. The sequence is that of Photosystem II reaction center protein M from Prochlorococcus marinus (strain SARG / CCMP1375 / SS120).